We begin with the raw amino-acid sequence, 529 residues long: MSQQYSYGGGGGAGYPPPQMQPPNSYAQANYQGQPQGAQNQYYNGQQPHHNAPQQYYGNDYKQPLKPEGFEGERLQPKPKFRDPIFLVLFLLVFAGFIALSVICLRSYSNADVNVSIGRANVAGSTLNGHTAIMFMICCAVALVLSFVYILLVRTFPKIILEATLLLTTLSNVAFCVYLWVRGNTAAAIIFTIFAVLSVIAYFFMRKRIPLAKLILVTVIRTAEQYKSVYVVALGGLIVETAFSAWTSWVVVAAYQRFEPSGQAAGSSSSNASIIGIMVFIVFAYYWISEVIKNIAFTTVAGIFGVAYYNANKVANAAWGAFRRSMTYSLGSICFGSLIVAILDLLRALFNILQSQAASDGDMTGQILACVAGCCVSCIQGLVDYFNRYAYINIALYGNGYITAAKETWALLKDRGIDAIINDSLVNIVFNCGAFIIGLLTALFAFIYEQLTNPRYLQNDAGYYSIVLLVAFGLGFNIALSVGAGSIASGVSTYFVALAEDPYILQGKNPELFEMIRQQYPQVVQGVNH.

Positions 1 to 58 (MSQQYSYGGGGGAGYPPPQMQPPNSYAQANYQGQPQGAQNQYYNGQQPHHNAPQQYYG) are disordered. At 1-84 (MSQQYSYGGG…LQPKPKFRDP (84 aa)) the chain is on the cytoplasmic side. Low complexity predominate over residues 22-48 (PPNSYAQANYQGQPQGAQNQYYNGQQP). Residues 85–105 (IFLVLFLLVFAGFIALSVICL) traverse the membrane as a helical segment. At 106–132 (RSYSNADVNVSIGRANVAGSTLNGHTA) the chain is on the extracellular side. Asparagine 114 carries an N-linked (GlcNAc...) asparagine glycan. The chain crosses the membrane as a helical span at residues 133–153 (IMFMICCAVALVLSFVYILLV). Over 154 to 158 (RTFPK) the chain is Cytoplasmic. A helical membrane pass occupies residues 159–179 (IILEATLLLTTLSNVAFCVYL). The Extracellular portion of the chain corresponds to 180 to 184 (WVRGN). A helical transmembrane segment spans residues 185 to 205 (TAAAIIFTIFAVLSVIAYFFM). The Cytoplasmic portion of the chain corresponds to 206-230 (RKRIPLAKLILVTVIRTAEQYKSVY). The chain crosses the membrane as a helical span at residues 231–251 (VVALGGLIVETAFSAWTSWVV). The Extracellular portion of the chain corresponds to 252–271 (VAAYQRFEPSGQAAGSSSSN). Asparagine 271 carries an N-linked (GlcNAc...) asparagine glycan. The chain crosses the membrane as a helical span at residues 272–292 (ASIIGIMVFIVFAYYWISEVI). Residues 293 to 294 (KN) are Cytoplasmic-facing. Residues 295–315 (IAFTTVAGIFGVAYYNANKVA) traverse the membrane as a helical segment. Topologically, residues 316–325 (NAAWGAFRRS) are extracellular. Residues 326 to 346 (MTYSLGSICFGSLIVAILDLL) form a helical membrane-spanning segment. At 347–362 (RALFNILQSQAASDGD) the chain is on the cytoplasmic side. Residues 363 to 383 (MTGQILACVAGCCVSCIQGLV) form a helical membrane-spanning segment. Over 384–427 (DYFNRYAYINIALYGNGYITAAKETWALLKDRGIDAIINDSLVN) the chain is Extracellular. The N-linked (GlcNAc...) asparagine glycan is linked to asparagine 422. Residues 428–448 (IVFNCGAFIIGLLTALFAFIY) traverse the membrane as a helical segment. Residues 449-464 (EQLTNPRYLQNDAGYY) are Cytoplasmic-facing. A helical transmembrane segment spans residues 465–485 (SIVLLVAFGLGFNIALSVGAG). Residues 486–529 (SIASGVSTYFVALAEDPYILQGKNPELFEMIRQQYPQVVQGVNH) are Extracellular-facing.

Belongs to the CTL (choline transporter-like) family.

It localises to the cell membrane. Probably involved in transport through the plasma membrane. The protein is Protein PNS1 (PNS1) of Mycosarcoma maydis (Corn smut fungus).